The chain runs to 110 residues: Ig lambda-1 chain V region S178 (110 aa).

Positions 1–106 (QAVVTQESAL…RWVFGGGTKL (106 aa)) constitute an Ig-like domain.

This chain is Ig lambda-1 chain V region S178, found in Mus musculus (Mouse).